The following is a 1507-amino-acid chain: MDPSRRPPKDSPYANLFDLEPLMKFRIPKPEDEVDYYGSSSQDESRSTQGGVVANYSNGSKSRMNASSKKRKRWTEAEDAEDDDDLYNQHVTEEHYRSMLGEHVQKFKNRSKETQGNPPHLMGFPVLKSNVGSYRGRKPGNDYHGRFYDMDNSPNFAADVTPHRRGSYHDRDITPKIAYEPSYLDIGDGVIYKIPPSYDKLVASLNLPSFSDIHVEEFYLKGTLDLRSLAELMASDKRSGVRSRNGMGEPRPQYESLQARMKALSPSNSTPNFSLKVSEAAMNSAIPEGSAGSTARTILSEGGVLQVHYVKILEKGDTYEIVKRSLPKKLKAKNDPAVIEKTERDKIRKAWINIVRRDIAKHHRIFTTFHRKLSIDAKRFADGCQREVRMKVGRSYKIPRTAPIRTRKISRDMLLFWKRYDKQMAEERKKQEKEAAEAFKREQEQRESKRQQQRLNFLIKQTELYSHFMQNKTDSNPSEALPIGDENPIDEVLPETSAAEPSEVEDPEEAELKEKVLRAAQDAVSKQKQITDAFDTEYMKLRQTSEMEGPLNDISVSGSSNIDLHNPSTMPVTSTVQTPELFKGTLKEYQMKGLQWLVNCYEQGLNGILADEMGLGKTIQAMAFLAHLAEEKNIWGPFLVVAPASVLNNWADEISRFCPDLKTLPYWGGLQERTILRKNINPKRMYRRDAGFHILITSYQLLVTDEKYFRRVKWQYMVLDEAQAIKSSSSIRWKTLLSFNCRNRLLLTGTPIQNNMAELWALLHFIMPMLFDNHDQFNEWFSKGIENHAEHGGTLNEHQLNRLHAILKPFMLRRVKKDVVSELTTKTEVTVHCKLSSRQQAFYQAIKNKISLAELFDSNRGQFTDKKVLNLMNIVIQLRKVCNHPELFERNEGSSYLYFGVTSNSLLPHPFGELEDVHYSGGQNPIIYKIPKLLHQEVLQNSETFCSSVGRGISRESFLKHFNIYSPEYILKSIFPSDSGVDQVVSGSGAFGFSRLMDLSPSEVGYLALCSVAERLLFSILRWERQFLDELVNSLMESKDGDLSDNNIERVKTKAVTRMLLMPSKVETNFQKRRLSTGPTRPSFEALVISHQDRFLSSIKLLHSAYTYIPKARAPPVSIHCSDRNSAYRVTEELHQPWLKRLLIGFARTSEANGPRKPNSFPHPLIQEIDSELPVVQPALQLTHRIFGSCPPMQSFDPAKLLTDSGKLQTLDILLKRLRAGNHRVLLFAQMTKMLNILEDYMNYRKYKYLRLDGSSTIMDRRDMVRDFQHRSDIFVFLLSTRAGGLGINLTAADTVIFYESDWNPTLDLQAMDRAHRLGQTKDVTVYRLICKETVEEKILHRASQKNTVQQLVMTGGHVQGDDFLGAADVVSLLMDDAEAAQLEQKFRELPLQVKDRQKKKTKRIRIDAEGDATLEELEDVDRQDNGQEPLEEPEKPKSSNKKRRAASNPKARAPQKAKEEANGEDTPQRTKRVKRQTKSINESLEPVFSASVTESNKGFDPSSSAN.

2 disordered regions span residues 30-82 and 428-452; these read PEDE…DAED and RKKQ…KRQQ. Positions 38 to 67 are enriched in polar residues; the sequence is GSSSQDESRSTQGGVVANYSNGSKSRMNAS. Residues 350-475 form the DBINO domain; sequence AWINIVRRDI…SHFMQNKTDS (126 aa). Positions 428–450 are enriched in basic and acidic residues; the sequence is RKKQEKEAAEAFKREQEQRESKR. One can recognise a Helicase ATP-binding domain in the interval 598-769; sequence VNCYEQGLNG…WALLHFIMPM (172 aa). 611-618 provides a ligand contact to ATP; sequence DEMGLGKT. Residues 1210–1360 form the Helicase C-terminal domain; that stretch reads TLDILLKRLR…QLVMTGGHVQ (151 aa). The interval 1415–1507 is disordered; sequence LEELEDVDRQ…KGFDPSSSAN (93 aa). Residues 1491–1507 are compositionally biased toward polar residues; it reads ASVTESNKGFDPSSSAN.

The protein belongs to the SNF2/RAD54 helicase family. In terms of assembly, component of the INO80 chromatin-remodeling complex. Associates with REF6/EIN6.

It is found in the nucleus. The catalysed reaction is ATP + H2O = ADP + phosphate + H(+). Functionally, ATPase component of the chromatin remodeling INO80 complex which is involved in transcriptional regulation, DNA replication and DNA repair. Binds DNA. As part of the INO80 complex, remodels chromatin by shifting nucleosomes. The INO80 complex controls ethylene-induced H2A.Z eviction dynamics. Positive regulator of homologous recombination, but not an essential component of homologous recombination. Not involved in the illegitimate repair pathway. The chain is Chromatin-remodeling ATPase INO80 from Arabidopsis thaliana (Mouse-ear cress).